A 151-amino-acid polypeptide reads, in one-letter code: MAPRKAKVQKEEVQVQLGPQVRDGEIVFGVAHIYASFNDTFVHVTDLSGRETIARVTGGMKVKADRDEASPYAAMLAAQDVAEKCKTLGITALHIKLRATGGNKTKTPGPGAQSALRALARSSMKIGRIEDVTPIPSDSTRRKGGRRGRRL.

Residues 131-151 are disordered; the sequence is DVTPIPSDSTRRKGGRRGRRL. The segment covering 142–151 has biased composition (basic residues); sequence RKGGRRGRRL.

Belongs to the universal ribosomal protein uS11 family.

The sequence is that of Small ribosomal subunit protein uS11A from Drosophila melanogaster (Fruit fly).